The sequence spans 180 residues: ATP synthase subunit b 2 (180 aa).

A helical transmembrane segment spans residues 33–53 (IFWLLVTLVAIYFLLTRVALP).

This sequence belongs to the ATPase B chain family. In terms of assembly, F-type ATPases have 2 components, F(1) - the catalytic core - and F(0) - the membrane proton channel. F(1) has five subunits: alpha(3), beta(3), gamma(1), delta(1), epsilon(1). F(0) has three main subunits: a(1), b(2) and c(10-14). The alpha and beta chains form an alternating ring which encloses part of the gamma chain. F(1) is attached to F(0) by a central stalk formed by the gamma and epsilon chains, while a peripheral stalk is formed by the delta and b chains.

The protein resides in the cell inner membrane. Its function is as follows. F(1)F(0) ATP synthase produces ATP from ADP in the presence of a proton or sodium gradient. F-type ATPases consist of two structural domains, F(1) containing the extramembraneous catalytic core and F(0) containing the membrane proton channel, linked together by a central stalk and a peripheral stalk. During catalysis, ATP synthesis in the catalytic domain of F(1) is coupled via a rotary mechanism of the central stalk subunits to proton translocation. Functionally, component of the F(0) channel, it forms part of the peripheral stalk, linking F(1) to F(0). The b'-subunit is a diverged and duplicated form of b found in plants and photosynthetic bacteria. This Cereibacter sphaeroides (strain ATCC 17025 / ATH 2.4.3) (Rhodobacter sphaeroides) protein is ATP synthase subunit b 2 (atpF2).